Here is a 589-residue protein sequence, read N- to C-terminus: Phosphoenolpyruvate carboxykinase [GTP] (589 aa).

Substrate contacts are provided by residues Arg75 and 207-209 (YGG). The Mn(2+) site is built by Lys216 and His236. Ser258 contributes to the substrate binding site. A GTP-binding site is contributed by 259–264 (ASGKTN). Ser260 is an active-site residue. Asp287 is a Mn(2+) binding site. 374-376 (NSR) is a substrate binding site. Residues Arg376, Arg407, and 500-503 (FAEN) contribute to the GTP site.

It belongs to the phosphoenolpyruvate carboxykinase [GTP] family. Mn(2+) serves as cofactor.

The protein resides in the cytoplasm. It catalyses the reaction oxaloacetate + GTP = phosphoenolpyruvate + GDP + CO2. The protein operates within carbohydrate biosynthesis; gluconeogenesis. In terms of biological role, catalyzes the conversion of oxaloacetate (OAA) to phosphoenolpyruvate (PEP), the rate-limiting step in the metabolic pathway that produces glucose from lactate and other precursors derived from the citric acid cycle. In Thermoplasma volcanium (strain ATCC 51530 / DSM 4299 / JCM 9571 / NBRC 15438 / GSS1), this protein is Phosphoenolpyruvate carboxykinase [GTP].